A 33-amino-acid chain; its full sequence is Rugosin-B (33 aa).

Residues C27 and C33 are joined by a disulfide bond.

This sequence belongs to the frog skin active peptide (FSAP) family. Brevinin subfamily. As to expression, expressed by the skin glands.

It localises to the secreted. In terms of biological role, shows antibacterial activity against both Gram-negative and Gram-positive bacteria. This Glandirana rugosa (Japanese wrinkled frog) protein is Rugosin-B.